We begin with the raw amino-acid sequence, 682 residues long: Potassium-transporting ATPase ATP-binding subunit (682 aa).

The next 4 membrane-spanning stretches (helical) occupy residues 34–54 (PVMF…IAMA), 62–82 (ALFS…ANFA), 219–239 (IALT…TATL), and 254–274 (VLVA…LSAI). The active-site 4-aspartylphosphate intermediate is Asp307. ATP contacts are provided by residues Asp344, Glu348, 377–384 (FTAQSRMS), and Lys395. Mg(2+)-binding residues include Asp518 and Asp522. Transmembrane regions (helical) follow at residues 588–608 (FAII…LNIM), 616–636 (AILS…PLAL), and 656–676 (IYGL…DLLL).

This sequence belongs to the cation transport ATPase (P-type) (TC 3.A.3) family. Type IA subfamily. In terms of assembly, the system is composed of three essential subunits: KdpA, KdpB and KdpC.

The protein localises to the cell inner membrane. The catalysed reaction is K(+)(out) + ATP + H2O = K(+)(in) + ADP + phosphate + H(+). Functionally, part of the high-affinity ATP-driven potassium transport (or Kdp) system, which catalyzes the hydrolysis of ATP coupled with the electrogenic transport of potassium into the cytoplasm. This subunit is responsible for energy coupling to the transport system and for the release of the potassium ions to the cytoplasm. In Escherichia coli O139:H28 (strain E24377A / ETEC), this protein is Potassium-transporting ATPase ATP-binding subunit.